We begin with the raw amino-acid sequence, 808 residues long: Probable ATP-dependent helicase MJ1401 (808 aa).

The Q motif motif lies at 189-217; that stretch reads YKIDELDIPEELKEIIKSRGIEELLPVQT. Residues 221–391 enclose the Helicase ATP-binding domain; that stretch reads KAGLLNGDDL…QLNAKLVLYN (171 aa). 234–241 lines the ATP pocket; that stretch reads SATSSGKT. The DEIH box motif lies at 336–339; the sequence is DEIH. The 190-residue stretch at 396–585 folds into the Helicase C-terminal domain; the sequence is PLERHIIFCK…EDEEEEQILA (190 aa).

The protein belongs to the DEAD box helicase family.

This Methanocaldococcus jannaschii (strain ATCC 43067 / DSM 2661 / JAL-1 / JCM 10045 / NBRC 100440) (Methanococcus jannaschii) protein is Probable ATP-dependent helicase MJ1401.